A 472-amino-acid chain; its full sequence is E1B 55 kDa protein (472 aa).

Residues 1-90 (MERPNPSVGG…GQRGEKRKLE (90 aa)) are disordered. Positions 32-44 (RLLAGAASARSGS) are enriched in low complexity. Residues 45–57 (SAGGGGGGGGGGE) show a composition bias toward gly residues. Phosphoserine occurs at positions 468 and 469.

Belongs to the adenoviridae E1B 55 kDa protein family. As to quaternary structure, interacts with host PML-4 and PML-5; this interaction promotes efficient subnuclear targeting of E1B-55K to PML nuclear bodies. Interacts with E4-ORF3 protein. Interacts with E4-ORF6 protein.

The protein localises to the host nucleus. Its subcellular location is the host cytoplasm. Plays a major role to prevent cellular inhibition of viral genome replication. Assembles an SCF-like E3 ubiquitin ligase complex based on the cellular proteins ELOB, ELOC, CUL5 and RBX1, in cooperation with viral E4orf6. This viral RING-type ligase ubiquitinates cellular substrates and targets them to proteasomal degradation: TP53/p53, LIG4, MRE11-RAD50-NBS1 (MRN) complex, ITGA3, DAXX and BLM. E1B-55K probably acts as the substrate-specific adapter of the SCF-like E3 ubiquitin ligase complex. Degradation of host TP53/p53 activity is essential for preventing E1A-induced TP53 accumulation that would otherwise lead to cell apoptosis and growth arrest. E1B-55K also inactivates TP53 transcription-factor activity by binding its transactivation domain. E1B-55K also functions as a SUMO1 E3 ligase for TP53 which causes the latter to be sequestered in promyelocytic leukemia (PML) nuclear bodies thereby contributing to maximal inhibition of TP53 function. The polypeptide is E1B 55 kDa protein (Homo sapiens (Human)).